The primary structure comprises 343 residues: Putative outer membrane protein y4fJ (343 aa).

An N-terminal signal peptide occupies residues 1–17 (MRMNFSTVLLGSSVALA).

The protein belongs to the alphaproteobacteria porin family.

The protein localises to the cell outer membrane. May act as an outer membrane pore. The protein is Putative outer membrane protein y4fJ of Sinorhizobium fredii (strain NBRC 101917 / NGR234).